The following is an 829-amino-acid chain: Leucine--tRNA ligase (829 aa).

Residues 42-52 (PYPSGRIHMGH) carry the 'HIGH' region motif. The 'KMSKS' region signature appears at 584–588 (KMSKS). An ATP-binding site is contributed by Lys-587.

This sequence belongs to the class-I aminoacyl-tRNA synthetase family.

Its subcellular location is the cytoplasm. It carries out the reaction tRNA(Leu) + L-leucine + ATP = L-leucyl-tRNA(Leu) + AMP + diphosphate. The chain is Leucine--tRNA ligase from Syntrophobacter fumaroxidans (strain DSM 10017 / MPOB).